The primary structure comprises 279 residues: tRNA (guanine-N(1)-)-methyltransferase (279 aa).

S-adenosyl-L-methionine contacts are provided by residues Gly117 and 141–146; that span reads LGDYVL. Residues 256 to 279 form a disordered region; that stretch reads WTPDGSGFRAGGDPVADSSDTNEP.

It belongs to the RNA methyltransferase TrmD family. In terms of assembly, homodimer.

Its subcellular location is the cytoplasm. The enzyme catalyses guanosine(37) in tRNA + S-adenosyl-L-methionine = N(1)-methylguanosine(37) in tRNA + S-adenosyl-L-homocysteine + H(+). Specifically methylates guanosine-37 in various tRNAs. This Kineococcus radiotolerans (strain ATCC BAA-149 / DSM 14245 / SRS30216) protein is tRNA (guanine-N(1)-)-methyltransferase.